The primary structure comprises 234 residues: Large ribosomal subunit protein uL1 (234 aa).

The protein belongs to the universal ribosomal protein uL1 family. As to quaternary structure, part of the 50S ribosomal subunit.

Functionally, binds directly to 23S rRNA. The L1 stalk is quite mobile in the ribosome, and is involved in E site tRNA release. Protein L1 is also a translational repressor protein, it controls the translation of the L11 operon by binding to its mRNA. This chain is Large ribosomal subunit protein uL1, found in Salmonella arizonae (strain ATCC BAA-731 / CDC346-86 / RSK2980).